The following is a 702-amino-acid chain: Ribosomal RNA large subunit methyltransferase K/L (702 aa).

The 112-residue stretch at 43-154 (LVYQSLMWSR…KETASIALDL (112 aa)) folds into the THUMP domain.

This sequence belongs to the methyltransferase superfamily. RlmKL family.

The protein localises to the cytoplasm. It catalyses the reaction guanosine(2445) in 23S rRNA + S-adenosyl-L-methionine = N(2)-methylguanosine(2445) in 23S rRNA + S-adenosyl-L-homocysteine + H(+). The catalysed reaction is guanosine(2069) in 23S rRNA + S-adenosyl-L-methionine = N(2)-methylguanosine(2069) in 23S rRNA + S-adenosyl-L-homocysteine + H(+). Specifically methylates the guanine in position 2445 (m2G2445) and the guanine in position 2069 (m7G2069) of 23S rRNA. In Shigella dysenteriae serotype 1 (strain Sd197), this protein is Ribosomal RNA large subunit methyltransferase K/L.